The chain runs to 308 residues: Porphobilinogen deaminase (308 aa).

Cysteine 241 is modified (S-(dipyrrolylmethanemethyl)cysteine).

This sequence belongs to the HMBS family. In terms of assembly, monomer. Requires dipyrromethane as cofactor.

It catalyses the reaction 4 porphobilinogen + H2O = hydroxymethylbilane + 4 NH4(+). It participates in porphyrin-containing compound metabolism; protoporphyrin-IX biosynthesis; coproporphyrinogen-III from 5-aminolevulinate: step 2/4. Its function is as follows. Tetrapolymerization of the monopyrrole PBG into the hydroxymethylbilane pre-uroporphyrinogen in several discrete steps. The polypeptide is Porphobilinogen deaminase (Staphylococcus epidermidis (strain ATCC 35984 / DSM 28319 / BCRC 17069 / CCUG 31568 / BM 3577 / RP62A)).